The sequence spans 130 residues: Profilin-1 (130 aa).

This sequence belongs to the profilin family. Interacts with actin. Interacts with RHO1 (GTP-bound form).

Its subcellular location is the cytoplasm. The protein localises to the cytoskeleton. It localises to the cell projection. The protein resides in the phagocytic cup. It is found in the cytoplasmic vesicle. Its subcellular location is the phagosome. In terms of biological role, binds to actin and affects the structure of the cytoskeleton. At high concentrations, profilin prevents the polymerization of actin, whereas it enhances it at low concentrations. By binding to PIP2, it inhibits the formation of IP3 and DG. This Entamoeba histolytica (strain ATCC 30459 / HM-1:IMSS / ABRM) protein is Profilin-1.